Here is a 578-residue protein sequence, read N- to C-terminus: ATP-dependent RNA helicase CHR1 (578 aa).

The tract at residues 1 to 95 (MDIFRILSRG…NETKAKEEEI (95 aa)) is disordered. 2 stretches are compositionally biased toward basic and acidic residues: residues 44 to 53 (EVERETDFFH) and 78 to 94 (NKEE…KEEE). A Q motif motif is present at residues 131–159 (DMIGRFHINKKVLSNLIDNEFVEPTPIQC). The Helicase ATP-binding domain occupies 162–339 (IPITLNNRDL…HSIMKDPLRI (178 aa)). 175-182 (APTGSGKT) contributes to the ATP binding site. The DEAD box motif lies at 286–289 (DEAD). Positions 350–514 (TIDQKLVFTG…GYSQWMEDMG (165 aa)) constitute a Helicase C-terminal domain. Composition is skewed to basic and acidic residues over residues 517–531 (SKKE…EIQR) and 561–578 (ESKQ…EREE). The tract at residues 517–578 (SKKEKKQIKT…ESHSNDEREE (62 aa)) is disordered.

This sequence belongs to the DEAD box helicase family. DDX52/ROK1 subfamily. As to quaternary structure, interacts with the U3 snoRNA and is associated with the 90S and 40S pre-ribosomes.

It is found in the nucleus. Its subcellular location is the nucleolus. The catalysed reaction is ATP + H2O = ADP + phosphate + H(+). In terms of biological role, ATP-dependent RNA helicase involved in 40S ribosomal subunit biogenesis. Required for the processing and cleavage of 35S pre-rRNA at sites A0, A1, and A2, leading to mature 18S rRNA. The sequence is that of ATP-dependent RNA helicase CHR1 (CHR1) from Candida albicans (strain SC5314 / ATCC MYA-2876) (Yeast).